The primary structure comprises 134 residues: MAGRGKAIGSSAAKKATSRSSKAGLQFPVGRIARFLKAGKYAERVGAGAPVYLAAVLEYLAAEVLELAGNAARDNKKTRIVPRHIQLAVRNDEELSRLLGAVTIANGGVMPNIHNLLLPKKAGSSAKAAAADDE.

The protein belongs to the histone H2A family. The nucleosome is a histone octamer containing two molecules each of H2A, H2B, H3 and H4 assembled in one H3-H4 heterotetramer and two H2A-H2B heterodimers. The octamer wraps approximately 147 bp of DNA.

The protein localises to the nucleus. It is found in the chromosome. Functionally, core component of nucleosome. Nucleosomes wrap and compact DNA into chromatin, limiting DNA accessibility to the cellular machineries which require DNA as a template. Histones thereby play a central role in transcription regulation, DNA repair, DNA replication and chromosomal stability. DNA accessibility is regulated via a complex set of post-translational modifications of histones, also called histone code, and nucleosome remodeling. The sequence is that of Probable histone H2A.3 from Oryza sativa subsp. indica (Rice).